A 215-amino-acid polypeptide reads, in one-letter code: Phosphatidylserine decarboxylase proenzyme (215 aa).

Ser183 serves as the catalytic Schiff-base intermediate with substrate; via pyruvic acid. Ser183 is modified (pyruvic acid (Ser); by autocatalysis).

Belongs to the phosphatidylserine decarboxylase family. PSD-A subfamily. Heterodimer of a large membrane-associated beta subunit and a small pyruvoyl-containing alpha subunit. Pyruvate is required as a cofactor. In terms of processing, is synthesized initially as an inactive proenzyme. Formation of the active enzyme involves a self-maturation process in which the active site pyruvoyl group is generated from an internal serine residue via an autocatalytic post-translational modification. Two non-identical subunits are generated from the proenzyme in this reaction, and the pyruvate is formed at the N-terminus of the alpha chain, which is derived from the carboxyl end of the proenzyme. The post-translation cleavage follows an unusual pathway, termed non-hydrolytic serinolysis, in which the side chain hydroxyl group of the serine supplies its oxygen atom to form the C-terminus of the beta chain, while the remainder of the serine residue undergoes an oxidative deamination to produce ammonia and the pyruvoyl prosthetic group on the alpha chain.

It localises to the cell membrane. It catalyses the reaction a 1,2-diacyl-sn-glycero-3-phospho-L-serine + H(+) = a 1,2-diacyl-sn-glycero-3-phosphoethanolamine + CO2. It functions in the pathway phospholipid metabolism; phosphatidylethanolamine biosynthesis; phosphatidylethanolamine from CDP-diacylglycerol: step 2/2. Functionally, catalyzes the formation of phosphatidylethanolamine (PtdEtn) from phosphatidylserine (PtdSer). This Symbiobacterium thermophilum (strain DSM 24528 / JCM 14929 / IAM 14863 / T) protein is Phosphatidylserine decarboxylase proenzyme.